The sequence spans 289 residues: Diaminopimelate epimerase (289 aa).

Substrate contacts are provided by N13, Q47, and N67. Residue C76 is the Proton donor of the active site. Substrate-binding positions include 77-78 (GN), N167, N200, and 218-219 (ER). Residue C227 is the Proton acceptor of the active site. 228–229 (GT) provides a ligand contact to substrate.

It belongs to the diaminopimelate epimerase family. As to quaternary structure, homodimer.

The protein resides in the cytoplasm. The catalysed reaction is (2S,6S)-2,6-diaminopimelate = meso-2,6-diaminopimelate. It functions in the pathway amino-acid biosynthesis; L-lysine biosynthesis via DAP pathway; DL-2,6-diaminopimelate from LL-2,6-diaminopimelate: step 1/1. Functionally, catalyzes the stereoinversion of LL-2,6-diaminopimelate (L,L-DAP) to meso-diaminopimelate (meso-DAP), a precursor of L-lysine and an essential component of the bacterial peptidoglycan. This Burkholderia pseudomallei (strain 668) protein is Diaminopimelate epimerase.